A 147-amino-acid polypeptide reads, in one-letter code: Thyrotropin subunit beta (147 aa).

Residues Met-1–Ser-20 form the signal peptide. 6 disulfides stabilise this stretch: Cys-22–Cys-72, Cys-36–Cys-87, Cys-39–Cys-126, Cys-47–Cys-103, Cys-51–Cys-105, and Cys-108–Cys-115. A glycan (N-linked (GlcNAc...) asparagine) is linked at Asn-43.

This sequence belongs to the glycoprotein hormones subunit beta family. As to quaternary structure, heterodimer of a common alpha chain and a unique beta chain which confers biological specificity to thyrotropin, lutropin, follitropin and gonadotropin.

The protein resides in the secreted. In terms of biological role, indispensable for the control of thyroid structure and metabolism. May play some role in the biological processes of the immature fishes. This Anguilla japonica (Japanese eel) protein is Thyrotropin subunit beta (tshb).